The chain runs to 84 residues: Small ribosomal subunit protein uS17 (84 aa).

The protein belongs to the universal ribosomal protein uS17 family. As to quaternary structure, part of the 30S ribosomal subunit.

In terms of biological role, one of the primary rRNA binding proteins, it binds specifically to the 5'-end of 16S ribosomal RNA. This is Small ribosomal subunit protein uS17 from Karelsulcia muelleri (strain GWSS) (Sulcia muelleri).